The chain runs to 208 residues: A-type ATP synthase subunit E (208 aa).

Residues 37 to 57 (DAEKTAEAEKNKILDNGKKQS) form a disordered region.

This sequence belongs to the V-ATPase E subunit family. As to quaternary structure, has multiple subunits with at least A(3), B(3), C, D, E, F, H, I and proteolipid K(x).

It is found in the cell membrane. Its function is as follows. Component of the A-type ATP synthase that produces ATP from ADP in the presence of a proton gradient across the membrane. The sequence is that of A-type ATP synthase subunit E from Methanobrevibacter smithii (strain ATCC 35061 / DSM 861 / OCM 144 / PS).